The sequence spans 35 residues: Photosystem II reaction center protein T (35 aa).

A helical transmembrane segment spans residues 3 to 23 (ALVYTFLLVSTLGIIFFAIFF).

This sequence belongs to the PsbT family. As to quaternary structure, PSII is composed of 1 copy each of membrane proteins PsbA, PsbB, PsbC, PsbD, PsbE, PsbF, PsbH, PsbI, PsbJ, PsbK, PsbL, PsbM, PsbT, PsbY, PsbZ, Psb30/Ycf12, at least 3 peripheral proteins of the oxygen-evolving complex and a large number of cofactors. It forms dimeric complexes.

The protein localises to the plastid. It is found in the chloroplast thylakoid membrane. Its function is as follows. Found at the monomer-monomer interface of the photosystem II (PS II) dimer, plays a role in assembly and dimerization of PSII. PSII is a light-driven water plastoquinone oxidoreductase, using light energy to abstract electrons from H(2)O, generating a proton gradient subsequently used for ATP formation. This is Photosystem II reaction center protein T from Stewartia pseudocamellia (Japanese stewartia).